Here is a 262-residue protein sequence, read N- to C-terminus: Putative ankyrin repeat protein R848 (262 aa).

7 ANK repeats span residues 8–37 (SNDY…NVTH), 38–67 (DNNY…DIRD), 68–97 (CRDY…NIRA), 99–127 (DDYA…NFRA), 128–157 (DNDY…DIRA), 159–187 (DDYA…DFRS), and 189–217 (NNAS…DVNT).

This Acanthamoeba polyphaga (Amoeba) protein is Putative ankyrin repeat protein R848.